The chain runs to 715 residues: Fatty acid oxidation complex subunit alpha (715 aa).

The interval 1–190 (MIYEGKAITV…KVGAVDAVVA (190 aa)) is enoyl-CoA hydratase/isomerase. Position 297 (aspartate 297) interacts with substrate. Residues 312 to 715 (HDVKQAAVLG…MAKNGQRFFN (404 aa)) form a 3-hydroxyacyl-CoA dehydrogenase region. NAD(+) is bound by residues methionine 325, aspartate 344, 401–403 (VVE), lysine 408, and serine 430. Histidine 451 serves as the catalytic For 3-hydroxyacyl-CoA dehydrogenase activity. Residue asparagine 454 coordinates NAD(+). Positions 501 and 660 each coordinate substrate.

In the N-terminal section; belongs to the enoyl-CoA hydratase/isomerase family. This sequence in the C-terminal section; belongs to the 3-hydroxyacyl-CoA dehydrogenase family. Heterotetramer of two alpha chains (FadB) and two beta chains (FadA).

It carries out the reaction a (3S)-3-hydroxyacyl-CoA + NAD(+) = a 3-oxoacyl-CoA + NADH + H(+). The enzyme catalyses a (3S)-3-hydroxyacyl-CoA = a (2E)-enoyl-CoA + H2O. It catalyses the reaction a 4-saturated-(3S)-3-hydroxyacyl-CoA = a (3E)-enoyl-CoA + H2O. The catalysed reaction is (3S)-3-hydroxybutanoyl-CoA = (3R)-3-hydroxybutanoyl-CoA. It carries out the reaction a (3Z)-enoyl-CoA = a 4-saturated (2E)-enoyl-CoA. The enzyme catalyses a (3E)-enoyl-CoA = a 4-saturated (2E)-enoyl-CoA. It participates in lipid metabolism; fatty acid beta-oxidation. Involved in the aerobic and anaerobic degradation of long-chain fatty acids via beta-oxidation cycle. Catalyzes the formation of 3-oxoacyl-CoA from enoyl-CoA via L-3-hydroxyacyl-CoA. It can also use D-3-hydroxyacyl-CoA and cis-3-enoyl-CoA as substrate. This is Fatty acid oxidation complex subunit alpha from Pseudomonas putida (strain ATCC 700007 / DSM 6899 / JCM 31910 / BCRC 17059 / LMG 24140 / F1).